We begin with the raw amino-acid sequence, 243 residues long: MILFPAIDLKDGQCVRLKLGDMDQAIIYNEDPAAQAKAFEDQGFEWLHVVDLNGAFAGESVNGTAVEAILKATKNPVQLGGGIRTLAHIENWLSRGLRRVILGTVAVRDPALVMEACKAFPGQVAVGIDAKGGKVAVEGWAEASRLGVIELAKKFEGAGVAAIIYTDIDRDGVLAGINWDSTLALAEAVSIPVIASGGLASMEDIRRLATPEMRKLEGAISGRALYDGRIDPAEALSVLRAAA.

The active-site Proton acceptor is the Asp8. Residue Asp129 is the Proton donor of the active site.

This sequence belongs to the HisA/HisF family.

Its subcellular location is the cytoplasm. It carries out the reaction 1-(5-phospho-beta-D-ribosyl)-5-[(5-phospho-beta-D-ribosylamino)methylideneamino]imidazole-4-carboxamide = 5-[(5-phospho-1-deoxy-D-ribulos-1-ylimino)methylamino]-1-(5-phospho-beta-D-ribosyl)imidazole-4-carboxamide. The protein operates within amino-acid biosynthesis; L-histidine biosynthesis; L-histidine from 5-phospho-alpha-D-ribose 1-diphosphate: step 4/9. The sequence is that of 1-(5-phosphoribosyl)-5-[(5-phosphoribosylamino)methylideneamino] imidazole-4-carboxamide isomerase from Brucella suis biovar 1 (strain 1330).